Reading from the N-terminus, the 102-residue chain is Small ribosomal subunit protein uS10 (102 aa).

The protein belongs to the universal ribosomal protein uS10 family. In terms of assembly, part of the 30S ribosomal subunit.

In terms of biological role, involved in the binding of tRNA to the ribosomes. This is Small ribosomal subunit protein uS10 (rpsJ) from Bacillus subtilis (strain 168).